A 398-amino-acid polypeptide reads, in one-letter code: Probable L-tyrosine/L-aspartate decarboxylase (398 aa).

K242 is subject to N6-(pyridoxal phosphate)lysine.

It belongs to the group II decarboxylase family. MfnA subfamily. It depends on pyridoxal 5'-phosphate as a cofactor.

The catalysed reaction is L-tyrosine + H(+) = tyramine + CO2. It carries out the reaction L-aspartate + H(+) = beta-alanine + CO2. It functions in the pathway cofactor biosynthesis; methanofuran biosynthesis. The protein operates within cofactor biosynthesis; coenzyme A biosynthesis. Functionally, catalyzes the decarboxylation of L-tyrosine to produce tyramine for methanofuran biosynthesis. Can also catalyze the decarboxylation of L-aspartate to produce beta-alanine for coenzyme A (CoA) biosynthesis. This is Probable L-tyrosine/L-aspartate decarboxylase from Methanosarcina mazei (strain ATCC BAA-159 / DSM 3647 / Goe1 / Go1 / JCM 11833 / OCM 88) (Methanosarcina frisia).